A 257-amino-acid polypeptide reads, in one-letter code: V-type proton ATPase subunit D (257 aa).

The tract at residues 215–257 (KEQEAAQKALEGPGPGEDAAHSENNPPRNLLASEEDNLPVLFN) is disordered.

This sequence belongs to the V-ATPase D subunit family. As to quaternary structure, V-ATPase is a heteromultimeric enzyme made up of two complexes: the ATP-hydrolytic V1 complex and the proton translocation V0 complex. The V1 complex consists of three catalytic AB heterodimers that form a heterohexamer, three peripheral stalks each consisting of EG heterodimers, one central rotor including subunits D and F, and the regulatory subunits C and H. The proton translocation complex V0 consists of the proton transport subunit a, a ring of proteolipid subunits c9c'', rotary subunit d, subunits e and f, and the accessory subunits vah-19/Ac45 and vah-20/PRR.

Functionally, subunit of the V1 complex of vacuolar(H+)-ATPase (V-ATPase), a multisubunit enzyme composed of a peripheral complex (V1) that hydrolyzes ATP and a membrane integral complex (V0) that translocates protons. V-ATPase is responsible for acidifying and maintaining the pH of intracellular compartments and in some cell types, is targeted to the plasma membrane, where it is responsible for acidifying the extracellular environment. The polypeptide is V-type proton ATPase subunit D (Caenorhabditis elegans).